Consider the following 390-residue polypeptide: NADH-quinone oxidoreductase subunit D (390 aa).

The protein belongs to the complex I 49 kDa subunit family. As to quaternary structure, NDH-1 is composed of 14 different subunits. Subunits NuoB, C, D, E, F, and G constitute the peripheral sector of the complex.

Its subcellular location is the cell membrane. The enzyme catalyses a quinone + NADH + 5 H(+)(in) = a quinol + NAD(+) + 4 H(+)(out). NDH-1 shuttles electrons from NADH, via FMN and iron-sulfur (Fe-S) centers, to quinones in the respiratory chain. The immediate electron acceptor for the enzyme in this species is believed to be ubiquinone. Couples the redox reaction to proton translocation (for every two electrons transferred, four hydrogen ions are translocated across the cytoplasmic membrane), and thus conserves the redox energy in a proton gradient. This Wolbachia pipientis subsp. Culex pipiens (strain wPip) protein is NADH-quinone oxidoreductase subunit D.